The chain runs to 337 residues: Inositol 2-dehydrogenase (337 aa).

It belongs to the Gfo/Idh/MocA family. Homotetramer.

It catalyses the reaction myo-inositol + NAD(+) = scyllo-inosose + NADH + H(+). In terms of biological role, involved in the oxidation of myo-inositol (MI) to 2-keto-myo-inositol (2KMI or 2-inosose). This chain is Inositol 2-dehydrogenase, found in Corynebacterium glutamicum (strain ATCC 13032 / DSM 20300 / JCM 1318 / BCRC 11384 / CCUG 27702 / LMG 3730 / NBRC 12168 / NCIMB 10025 / NRRL B-2784 / 534).